The chain runs to 309 residues: uncharacterized protein (309 aa).

Residues 23-43 traverse the membrane as a helical segment; sequence ALVLSSIVNILLLLLIYSTVF.

Belongs to the chlamydial CPn_0593/CT_474/TC_0759 family.

Its subcellular location is the membrane. This is an uncharacterized protein from Chlamydia trachomatis serovar D (strain ATCC VR-885 / DSM 19411 / UW-3/Cx).